Here is a 606-residue protein sequence, read N- to C-terminus: NADH-ubiquinone oxidoreductase chain 5 (606 aa).

A run of 16 helical transmembrane segments spans residues 4 to 24 (FSSL…AINF), 43 to 63 (AFIT…EMII), 84 to 104 (FFSM…MEFS), 114 to 134 (INQF…LVTA), 140 to 160 (LFIG…WWYG), 171 to 191 (AILY…WFLI), 213 to 233 (LMGL…HPWL), 241 to 261 (TPVS…FLLI), 272 to 292 (FGQS…AMCA), 301 to 320 (IIAF…IGIN), 325 to 347 (AFLH…GSII), 366 to 386 (MPFT…MPFL), 413 to 433 (LVAT…ALLG), 457 to 477 (LLIG…PMTI), 485 to 505 (YLKM…LEIS), and 582 to 602 (GLIK…TTLL).

It belongs to the complex I subunit 5 family. Core subunit of respiratory chain NADH dehydrogenase (Complex I) which is composed of 45 different subunits.

It localises to the mitochondrion inner membrane. The catalysed reaction is a ubiquinone + NADH + 5 H(+)(in) = a ubiquinol + NAD(+) + 4 H(+)(out). Its function is as follows. Core subunit of the mitochondrial membrane respiratory chain NADH dehydrogenase (Complex I) which catalyzes electron transfer from NADH through the respiratory chain, using ubiquinone as an electron acceptor. Essential for the catalytic activity and assembly of complex I. The chain is NADH-ubiquinone oxidoreductase chain 5 (MT-ND5) from Ovis aries (Sheep).